A 377-amino-acid polypeptide reads, in one-letter code: 5-hydroxytryptamine receptor 1D (377 aa).

Residues N5, N17, and N21 are each glycosylated (N-linked (GlcNAc...) asparagine). Helical transmembrane passes span I39–F64, L76–A97, and L110–L134. Cysteines 111 and 188 form a disulfide. Serotonin contacts are provided by D118 and C122. Positions D135–Y137 match the DRY motif; important for ligand-induced conformation changes motif. Transmembrane regions (helical) follow at residues A155–W176, I195–G218, K301–I326, and A336–F359. S321 is a binding site for serotonin. An NPxxY motif; important for ligand-induced conformation changes and signaling motif is present at residues N352–Y356.

The protein belongs to the G-protein coupled receptor 1 family. Homodimer. Heterodimer with HTR1B.

It localises to the cell membrane. Functionally, G-protein coupled receptor for 5-hydroxytryptamine (serotonin). Also functions as a receptor for ergot alkaloid derivatives, various anxiolytic and antidepressant drugs and other psychoactive substances. Ligand binding causes a conformation change that triggers signaling via guanine nucleotide-binding proteins (G proteins) and modulates the activity of downstream effectors, such as adenylate cyclase. HTR1D is coupled to G(i)/G(o) G alpha proteins and mediates inhibitory neurotransmission by inhibiting adenylate cyclase activity. Regulates the release of 5-hydroxytryptamine in the brain, and thereby affects neural activity. May also play a role in regulating the release of other neurotransmitters. May play a role in vasoconstriction. The sequence is that of 5-hydroxytryptamine receptor 1D (HTR1D) from Canis lupus familiaris (Dog).